A 326-amino-acid chain; its full sequence is DnaJ homolog subfamily B member 6 (326 aa).

Positions 3–69 (DYYEVLGVQK…KKRDIYDRFG (67 aa)) constitute a J domain. Positions 249-326 (ALPFQPTNTR…KKKKSTKGSY (78 aa)) are disordered. S277 is subject to Phosphoserine.

Homooligomer.

The protein resides in the cytoplasm. Its subcellular location is the perinuclear region. It localises to the nucleus. Has a stimulatory effect on the ATPase activity of HSP70 in a dose-dependent and time-dependent manner and hence acts as a co-chaperone of HSP70. Plays an indispensable role in the organization of KRT8/KRT18 filaments. Acts as an endogenous molecular chaperone for neuronal proteins including huntingtin. Suppresses aggregation and toxicity of polyglutamine-containing, aggregation-prone proteins. Also reduces cellular toxicity and caspase-3 activity. This chain is DnaJ homolog subfamily B member 6, found in Gallus gallus (Chicken).